A 151-amino-acid polypeptide reads, in one-letter code: Ribonuclease H (151 aa).

One can recognise an RNase H type-1 domain in the interval 2-143; it reads SDDWVEIYTD…ADLLANRGVV (142 aa). The Mg(2+) site is built by D11, E49, D71, and D135.

This sequence belongs to the RNase H family. In terms of assembly, monomer. Mg(2+) is required as a cofactor.

It is found in the cytoplasm. The enzyme catalyses Endonucleolytic cleavage to 5'-phosphomonoester.. In terms of biological role, endonuclease that specifically degrades the RNA of RNA-DNA hybrids. The sequence is that of Ribonuclease H from Stutzerimonas stutzeri (strain A1501) (Pseudomonas stutzeri).